The chain runs to 366 residues: Sulfite reductase, dissimilatory-type subunit beta (366 aa).

Residues Cys-140, Cys-177, Cys-178, Cys-182, Cys-220, Cys-241, Cys-244, and Cys-247 each contribute to the [4Fe-4S] cluster site. Residue Cys-182 coordinates siroheme. Residues 232–262 form the 4Fe-4S ferredoxin-type domain; sequence KTIKVDVEKCMYCGNCYTMCPGMPLFDPEND.

In terms of assembly, heterotetramer of two alpha and two beta subunits. Requires [4Fe-4S] cluster as cofactor. Siroheme is required as a cofactor.

The protein resides in the membrane. The enzyme catalyses [DsrC protein]-trisulfide + NAD(+) + 3 H2O = [DsrC protein]-dithiol + sulfite + NADH + 3 H(+). Catalyzes the reduction of sulfite to sulfide. This is the terminal oxidation reaction in sulfate respiration. The sequence is that of Sulfite reductase, dissimilatory-type subunit beta (dsrB) from Archaeoglobus fulgidus (strain ATCC 49558 / DSM 4304 / JCM 9628 / NBRC 100126 / VC-16).